A 71-amino-acid polypeptide reads, in one-letter code: Guanine nucleotide-binding protein G(I)/G(S)/G(O) subunit gamma-2 (71 aa).

The residue at position 2 (alanine 2) is an N-acetylalanine. Residue cysteine 68 is modified to Cysteine methyl ester. The S-geranylgeranyl cysteine moiety is linked to residue cysteine 68. A propeptide spans 69–71 (AIL) (removed in mature form).

This sequence belongs to the G protein gamma family. In terms of assembly, g proteins are composed of 3 units, alpha, beta and gamma. In this context, interacts with GNB2. The heterodimer formed by GNB1 and GNG2 interacts with ARHGEF5. The heterodimer formed by GNB1 and GNG2 interacts with GRK2. Component of the TAS2R14-GNAI1 complex, consisting of TAS2R14, GNAI1, GNB1 and GNG2. Forms complexes with TAS2R14 and G-proteins; these complexes play a role in the perception of bitterness. Component of the TAS2R14-GNAT3 complex, consisting of TAS2R14, GNAT3, GNB1 and GNG2. Component of the TAS2R14-GNAS2 complex, consisting of TAS2R14, GNAS2, GNB1 and GNG2. As to expression, adrenal gland and brain.

The protein localises to the cell membrane. Functionally, guanine nucleotide-binding proteins (G proteins) are involved as a modulator or transducer in various transmembrane signaling systems. The beta and gamma chains are required for the GTPase activity, for replacement of GDP by GTP, and for G protein-effector interaction. This is Guanine nucleotide-binding protein G(I)/G(S)/G(O) subunit gamma-2 (GNG2) from Bos taurus (Bovine).